We begin with the raw amino-acid sequence, 562 residues long: Glucose-6-phosphate isomerase (562 aa).

Residue E370 is the Proton donor of the active site. Residues H401 and K526 contribute to the active site.

Belongs to the GPI family.

It is found in the cytoplasm. It carries out the reaction alpha-D-glucose 6-phosphate = beta-D-fructose 6-phosphate. It participates in carbohydrate biosynthesis; gluconeogenesis. The protein operates within carbohydrate degradation; glycolysis; D-glyceraldehyde 3-phosphate and glycerone phosphate from D-glucose: step 2/4. Catalyzes the reversible isomerization of glucose-6-phosphate to fructose-6-phosphate. The protein is Glucose-6-phosphate isomerase of Deinococcus geothermalis (strain DSM 11300 / CIP 105573 / AG-3a).